The following is a 179-amino-acid chain: Nuclear transcription factor Y subunit B (179 aa).

The disordered stretch occupies residues 1 to 32 (MAEAPASPGGGGGSHESGSPRGGGGGGSVREQ). Residues 8–28 (PGGGGGSHESGSPRGGGGGGS) show a composition bias toward gly residues. Residues 36–42 (LPIANIS) mediate DNA binding. A subunit association domain (SAD) region spans residues 63–74 (VQECVSEFISFI). The tract at residues 147-179 (SSSAAEGMGQQGAYNQGMGYMQPQYHNGDISNV) is disordered.

The protein belongs to the NFYB/HAP3 subunit family. As to quaternary structure, heterotrimeric transcription factor composed of three components, NF-YA, NF-YB and NF-YC. NF-YB and NF-YC must interact and dimerize for NF-YA association and DNA binding.

It localises to the nucleus. Its function is as follows. Component of the NF-Y/HAP transcription factor complex. The NF-Y complex stimulates the transcription of various genes by recognizing and binding to a CCAAT motif in promoters. This Zea mays (Maize) protein is Nuclear transcription factor Y subunit B (NFY2).